The primary structure comprises 572 residues: Moesin (572 aa).

Residues 1–294 (MPRGVAVRVT…GNHELYMRRR (294 aa)) enclose the FERM domain. Disordered regions lie at residues 444 to 508 (SQER…SYLP) and 523 to 544 (LQAM…QENI). Residues 454 to 475 (AQEAAAAQHAAQLAAQREAQQL) show a composition bias toward low complexity. Acidic residues predominate over residues 480–502 (EGEEDEQDHELEVQQDDNDDLDD). A compositionally biased stretch (basic and acidic residues) spans 525-544 (AMKDESKGEDRYDKIHQENI).

It localises to the cell membrane. The protein resides in the cytoplasm. It is found in the cytoskeleton. Its subcellular location is the cell projection. In terms of biological role, probably involved in connections of major cytoskeletal structures to the plasma membrane. This Lytechinus variegatus (Green sea urchin) protein is Moesin.